Here is a 468-residue protein sequence, read N- to C-terminus: Dimethylamine methyltransferase MtbB1 (468 aa).

Residue Pyl-356 is a non-standard amino acid, pyrrolysine.

Belongs to the dimethylamine methyltransferase family.

It catalyses the reaction Co(I)-[dimethylamine-specific corrinoid protein] + dimethylamine + H(+) = methyl-Co(III)-[dimethylamine-specific corrinoid protein] + methylamine. It functions in the pathway one-carbon metabolism; methanogenesis from dimethylamine. Its function is as follows. Catalyzes the transfer of a methyl group from dimethylamine to the corrinoid cofactor of MtbC. The polypeptide is Dimethylamine methyltransferase MtbB1 (mtbB1) (Methanosarcina mazei (strain ATCC BAA-159 / DSM 3647 / Goe1 / Go1 / JCM 11833 / OCM 88) (Methanosarcina frisia)).